Consider the following 332-residue polypeptide: Melanocortin receptor 4 (332 aa).

Over 1–43 the chain is Extracellular; it reads MVNSTHRGMHASLHLWNRSSHRLHSNASESLGKGYSDGGCYEQ. N-linked (GlcNAc...) asparagine glycans are attached at residues asparagine 3, asparagine 17, and asparagine 26. 2 cysteine pairs are disulfide-bonded: cysteine 40–cysteine 279 and cysteine 271–cysteine 277. Residues 44 to 69 traverse the membrane as a helical segment; it reads LFVSPEVFVTLGVISLLENILVIVAI. The Cytoplasmic segment spans residues 70 to 81; that stretch reads AKNKNLHSPMYF. Residues 82–106 form a helical membrane-spanning segment; it reads FICSLAVADMLVSVSNGSETIVITL. Residues glutamate 100, aspartate 122, and aspartate 126 each contribute to the Ca(2+) site. The Extracellular segment spans residues 107 to 123; it reads LNSTDTDTQSFTVNIDN. Residues 124-145 traverse the membrane as a helical segment; it reads VIDSVICSSLLASICSLLSIAV. Residues 146–165 lie on the Cytoplasmic side of the membrane; sequence DRYFTIFYALQYHNIMTVKR. The helical transmembrane segment at 166 to 186 threads the bilayer; it reads VRIIISCIWAACTVSGILFII. Residues 187–191 are Extracellular-facing; sequence YSDSS. A helical membrane pass occupies residues 192–215; the sequence is AVIICLITMFFTMLALMASLYVHM. Residues 216 to 248 are Cytoplasmic-facing; sequence FLMARLHIKRIAVLPGTGAIRQGANMKGAITLT. Residues 249 to 271 form a helical membrane-spanning segment; that stretch reads ILIGVFVVCWAPFFLHLIFYISC. Residues 272 to 280 are Extracellular-facing; the sequence is PQNPYCVCF. Residues 281-304 form a helical membrane-spanning segment; the sequence is MSHFNLYLILIMCNSVIDPLIYAL. Topologically, residues 305–332 are cytoplasmic; it reads RSQELRKTFKEIICCYPLGGLCDLSSRY. Cysteine 318 is lipidated: S-palmitoyl cysteine.

This sequence belongs to the G-protein coupled receptor 1 family. In terms of assembly, homodimer; disulfide-linked, also forms higher order oligomers. Interacts with GNAS. Interacts with ATRNL1. Interacts with MGRN1; this interaction competes with GNAS-binding and thus inhibits agonist-induced cAMP production. Interacts with MRAP and MRAP2; these associated factors increase ligand-sensitivity and generation of cAMP.

The protein resides in the cell membrane. Hormone receptor that acts as a key component of the leptin-melanocortin pathway at the intersection of homeostatic maintenance of energetic state. Plays a role in regulating food intake: activation by a stimulating hormone such as anorexigenic alpha-melanocyte stimulating hormone (alpha-MSH) inhibits appetite, whereas binding to a natural antagonist like Agouti-related protein/AGRP promotes appetite. G-protein-coupled receptor that activates conventional Galphas signaling leading to induction of anorexogenic signaling in the hypothalamus to result in negative energy balance. Regulates the firing activity of neurons from the hypothalamus by alpha-MSH and AGRP independently of Galphas signaling by ligand-induced coupling of closure of inwardly rectifying potassium channel KCNJ13. In intestinal epithelial cells, plays a role in the inhibition of hepatic glucose production via nesfatin-1/NUCB2 leading to increased cyclic adenosine monophosphate (cAMP) levels and glucagon-like peptide 1 (GLP-1) secretion in the intestinal epithelium. This is Melanocortin receptor 4 (MC4R) from Macaca fascicularis (Crab-eating macaque).